The following is a 693-amino-acid chain: Exocyst complex component 7 (693 aa).

A Phosphoserine modification is found at Ser-236. Residues 236-259 (SWGHEALRPRHSGRQTEPKKTTSA) form a disordered region.

The protein belongs to the EXO70 family. The exocyst complex is composed of Sec3/Exoc1, Sec5/Exoc2, Sec6/Exoc3, Sec8/Exoc4, Sec10/Exoc5, Sec15/Exoc6, Exo70/Exoc7 and Exo84/Exoc8.

Its function is as follows. Required for exocytosis. Thought to function in intracellular vesicle targeting and docking before SNARE complex formation. The sequence is that of Exocyst complex component 7 from Drosophila melanogaster (Fruit fly).